The sequence spans 491 residues: FAD-dependent monooxygenase idtM (491 aa).

Positions 34, 48, 107, 307, and 320 each coordinate FAD. The helical transmembrane segment at 448-468 threads the bilayer; sequence ILSLVYVVAGLAMMYMSIYLV.

This sequence belongs to the paxM FAD-dependent monooxygenase family. Requires FAD as cofactor.

It is found in the membrane. It functions in the pathway secondary metabolite biosynthesis. FAD-dependent monooxygenase; part of the gene cluster that mediates the biosynthesis of paspalitrems, indole-diterpene (IDT) mycotoxins that are potent tremorgens in mammals. The geranylgeranyl diphosphate (GGPP) synthase idtG is proposed to catalyze the first step in IDT biosynthesis via catalysis of a series of iterative condensations of isopentenyl diphosphate (IPP) with dimethylallyl diphosphate (DMAPP), geranyl diphosphate (GPP), and farnesyl diphosphate (FPP), to form GGPP. Condensation of indole-3-glycerol phosphate with GGPP by the prenyltransferase idtC then forms 3-geranylgeranylindole (3-GGI). Epoxidation of the two terminal alkenes of the geranylgeranyl moiety by the FAD-dependent monooxygenase idtM, and cyclization by the terpene cyclase idtB then leads to the production of paspaline. The cytochrome P450 monooxygenase idtP then catalyzes oxidative elimination of the pendant methyl group at C-12 of paspaline and generates the C-10 ketone to yield 13-desoxypaxilline. The cytochrome P450 monooxygenase idtQ may catalyze the C-13 oxidation of 13-desoxypaxilline to afford paxilline. Considering that both paspalicine and paxilline were detected in C.paspali, idtQ also catalyzes the formation of paspalinine from 13-desoxypaxilline via paspalicine as an intermediate. Finally, the alpha-prenyltransferase idtF prenylates paspalinine at the C-20 or the C-21 positions to yield paspalitrems A and C, respectively. The hydroxylation of paspalitrem A at C-32 by a still unknown oxidase affords paspalitrem B. This Claviceps paspali (Rye ergot fungus) protein is FAD-dependent monooxygenase idtM.